The primary structure comprises 90 residues: Probable Fe(2+)-trafficking protein (90 aa).

The protein belongs to the Fe(2+)-trafficking protein family.

Its function is as follows. Could be a mediator in iron transactions between iron acquisition and iron-requiring processes, such as synthesis and/or repair of Fe-S clusters in biosynthetic enzymes. This chain is Probable Fe(2+)-trafficking protein, found in Methylococcus capsulatus (strain ATCC 33009 / NCIMB 11132 / Bath).